A 419-amino-acid polypeptide reads, in one-letter code: Gamma-glutamyl phosphate reductase (419 aa).

It belongs to the gamma-glutamyl phosphate reductase family.

Its subcellular location is the cytoplasm. It catalyses the reaction L-glutamate 5-semialdehyde + phosphate + NADP(+) = L-glutamyl 5-phosphate + NADPH + H(+). Its pathway is amino-acid biosynthesis; L-proline biosynthesis; L-glutamate 5-semialdehyde from L-glutamate: step 2/2. Functionally, catalyzes the NADPH-dependent reduction of L-glutamate 5-phosphate into L-glutamate 5-semialdehyde and phosphate. The product spontaneously undergoes cyclization to form 1-pyrroline-5-carboxylate. The protein is Gamma-glutamyl phosphate reductase of Caldicellulosiruptor saccharolyticus (strain ATCC 43494 / DSM 8903 / Tp8T 6331).